The chain runs to 181 residues: Nucleoside triphosphate/diphosphate phosphatase (181 aa).

Residue R26 is the Proton donor of the active site. 6 residues coordinate Mg(2+): N90, D106, D108, D110, D123, and E126.

This sequence belongs to the Ntdp family. Mg(2+) is required as a cofactor.

It catalyses the reaction a ribonucleoside 5'-triphosphate + H2O = a ribonucleoside 5'-diphosphate + phosphate + H(+). The enzyme catalyses a ribonucleoside 5'-diphosphate + H2O = a ribonucleoside 5'-phosphate + phosphate + H(+). Has nucleoside phosphatase activity towards nucleoside triphosphates and nucleoside diphosphates. The protein is Nucleoside triphosphate/diphosphate phosphatase of Ligilactobacillus salivarius (strain UCC118) (Lactobacillus salivarius).